Consider the following 103-residue polypeptide: Large ribosomal subunit protein bL21 (103 aa).

It belongs to the bacterial ribosomal protein bL21 family. As to quaternary structure, part of the 50S ribosomal subunit. Contacts protein L20.

Its function is as follows. This protein binds to 23S rRNA in the presence of protein L20. This chain is Large ribosomal subunit protein bL21, found in Actinobacillus succinogenes (strain ATCC 55618 / DSM 22257 / CCUG 43843 / 130Z).